Here is a 1072-residue protein sequence, read N- to C-terminus: DNA-directed RNA polymerase subunit beta (1072 aa).

Belongs to the RNA polymerase beta chain family. As to quaternary structure, in plastids the minimal PEP RNA polymerase catalytic core is composed of four subunits: alpha, beta, beta', and beta''. When a (nuclear-encoded) sigma factor is associated with the core the holoenzyme is formed, which can initiate transcription.

The protein resides in the plastid. It localises to the chloroplast. The enzyme catalyses RNA(n) + a ribonucleoside 5'-triphosphate = RNA(n+1) + diphosphate. In terms of biological role, DNA-dependent RNA polymerase catalyzes the transcription of DNA into RNA using the four ribonucleoside triphosphates as substrates. The sequence is that of DNA-directed RNA polymerase subunit beta from Lemna minor (Common duckweed).